The sequence spans 1136 residues: Alpha-1,4-glucan:maltose-1-phosphate maltosyltransferase (1136 aa).

Positions 1 to 439 are unknown; the sequence is METRPSFAPN…TLLRAQRARP (439 aa). The tract at residues 440–1136 is maltosyltransferase; it reads VTTAPAEDRR…DVPAQEVHER (697 aa). Alpha-maltose 1-phosphate-binding residues include Lys710, Gln770, and Asp805. Asp842 functions as the Nucleophile in the catalytic mechanism. Asn843 contacts alpha-maltose 1-phosphate. Glu871 acts as the Proton donor in catalysis. An alpha-maltose 1-phosphate-binding site is contributed by 982-983; sequence KY.

It in the C-terminal section; belongs to the glycosyl hydrolase 13 family. GlgE subfamily. As to quaternary structure, homodimer.

It catalyses the reaction alpha-maltose 1-phosphate + [(1-&gt;4)-alpha-D-glucosyl](n) = [(1-&gt;4)-alpha-D-glucosyl](n+2) + phosphate. Its function is as follows. Maltosyltransferase that uses maltose 1-phosphate (M1P) as the sugar donor to elongate linear or branched alpha-(1-&gt;4)-glucans. Is involved in a branched alpha-glucan biosynthetic pathway from trehalose, together with TreS, Mak and GlgB. The sequence is that of Alpha-1,4-glucan:maltose-1-phosphate maltosyltransferase (glgE) from Burkholderia pseudomallei (strain K96243).